Reading from the N-terminus, the 2237-residue chain is MSEELARSKQYGYKENSNLVFYSERNRSELKEPKGEPETLWGRLRGEMGDRVNYSKPLELLEKMQNLKRKTIEKEGGDVNSSNDTYSTTKKVKNQNPLEKKSTNRKSNGNNNNEKPIDILSATESFQGLYKPKTKETRITYETLLTFIQRYVGDQPTEVVKGALDEILSILKDDTIRAPEKKIEISKLLKGLNDVSFAELTQLGKQITDFKDSELAKQQQQQQQQQSMDSLDDEQGVAVIIDEEEEEENLSDFEIRDDDDDDDDVDNNEVDDNNNNDSEAQDSEIQTKDENNNDDDENQKIKENNNNNNKSQKPDTKNTKDDKNNNSKLISPNEIDSFWIQRKISEFERDHDLSKQLAEKTLNILRQPNVRRCEQQLVDLFTIDKLDFLKLIINNKQTILYCTLLAKAENDQERKKIEDEMSSNPVTLSILNRLKGNEVTAATTEKTIEKTESNKKDVEMKQQQQQQQDEIKKPKKLLNLEELSFQQGSHLMTNKEFKFPKGSKREQYKGFEEIHVPARANPPFNPNERLISIEELPEWSRLPFEESGVKSLNRVQSKLFDCAFKTDNNLLLSAPTSSGKTNVAMLTILHEIGKNRDRDSGKIRLDAFKIVYIAPMKSLVQEMVGNFSKRLKSYGIVVNELTGDQSLTNKQISETQIIVTTPEKWDIITRKSGDRAYTQLVKLIIIDEIHLLHDERGPVLECIVARTLRMIESTQQMVRLVGLSATLPNYEDVATFLRVEPDGVFYFDSSYRPIPLEQQYIGISDRGIKQLQRCNDITFTKVSERVGDHQILIFVHSRRETAKTGKDLRDRAVEDQSIDRYIRDPASREILRATASKQIQNAELKDLLPYGIGIHHAGLSRSDRSLVEDLFGDNRIQVLISTATLAWGVNLPAHTVIIKGTQIYNPEKGWCELSPLDVTQMLGRAGRPPFDKEGEGIIITSQHELQFYLSLLNTQLSIESQFISRIADNLNAEIVLGSIQTVRDAVNWLGYTYLYICMIRNPPLYEISYDDFEKDPLLEQRRLDLVHSAATILEKNSLIKYDRKSGKLQSTELGKVASHYYITNSSMSIYQEHLKPSMSDIELLRVFSLSSEFKNVVVREGEKFELEKLLERVPIPIKENIEEPSSKINVLLQTYISNLKLDGFALVVDMFYIAQSASRITRALFEIVLKKGWAQLAKKILNLAKMIDSKMWSSQSPLRQFHKISPKVLNQLERRGIPIEDLYEYNSQQLGNAIQNPSEGKQLFDLIHNFPKLDLTAHVQPILHGLLRVELSITPDFQYDERYHNNSIGWWIIVEDVDGERILYFEYFSLKKKMVNGEDQLVSFTVPLSQPLPPQYYVRVISDHWIGAEYSLPISFQHLILPEKYPPCRPLLDLQPLPIQVLKDPKAESIFKPTFSIFNAIQTQVFNCMYQSNDNAFISAPTNSGKTVCAEIALIRCFKQNPKAKVVYLAPMQDLASVRLKDWSNKFGVKSPFGLVVSDLTGDAVTDNKILDRSNIIVTNCEKWDILSRKWKQRKALQSINLLIVDELHLIGGEYGPTMEIVVSRMRYISTQTGNALRVIALSSSIANARDLVLWIGATPQTCYNFHPNVRPIPVEYQIQGFEFPHFNARMLAMTKPTVYEVAKNKNQQSIVFVPTRKLSRSLAADIIANVSSFEDTLTKPYLVCEEHVLTPYLEDVDSFALKQSLQMGVAFYHDGLTERERRVVEILFRSGSIRVLIATHSVAWLLDNVFAQLVVIMGTQLYQGKDIRYIDYPINDILQMIGRAGKQEGGGVISNKVAKVLLLCHAPKKEYYKMFLNEPLPVESHLDHCLHDQFNSEIVTKTITKKQDALDYLTWTFLYRRLNQNPNYYNLSGVSHLHLSEHLSELVENTLVELEQSNCITIQDDQDKVSPLNLGIIASYYYLKYQTIELFGSSLKSTTRRRGIMDIISNAPEFNSLPIRHREDQILMKLASHLPQKIDKPNYQEISTKVNVLLQCHFSRESISADLYQDQKFILENATRLLQAIVDVISSNSWLQPAIAAMELSQMITQAMWDSDSVFKQLPHMNKRRIDAITSQGIESVFDLMSLDDNSRIQLLDLSQQESNDLVQSFMKYPDIDISYQVQDEDDLHADSIMTVEMVIERDLGDDEENPIEINDSINVVSAPYYPKEKICGWWALIGDSKNNHLLAIKRITFLKKTKVKFEFPTPAVGKHQLSLYLFSDSYNGCDQEHELNINILPAEIEDEDEDEEEDNEMDE.

4 disordered regions span residues 1 to 48, 71 to 118, 242 to 330, and 445 to 472; these read MSEE…RGEM, TIEK…KPID, DEEE…SKLI, and EKTI…DEIK. Over residues 24 to 37 the composition is skewed to basic and acidic residues; it reads ERNRSELKEPKGEP. The segment covering 79–97 has biased composition (polar residues); that stretch reads VNSSNDTYSTTKKVKNQNP. Over residues 105–114 the composition is skewed to low complexity; the sequence is RKSNGNNNNE. Acidic residues predominate over residues 242-282; that stretch reads DEEEEEENLSDFEIRDDDDDDDDVDNNEVDDNNNNDSEAQD. Composition is skewed to basic and acidic residues over residues 312–325 and 446–460; these read QKPD…DKNN and KTIE…DVEM. Residues 440–468 adopt a coiled-coil conformation; sequence TAATTEKTIEKTESNKKDVEMKQQQQQQQ. Residues 561–745 form the Helicase ATP-binding 1 domain; that stretch reads DCAFKTDNNL…FLRVEPDGVF (185 aa). 574-581 is an ATP binding site; the sequence is APTSSGKT. A DEAH box motif is present at residues 687-690; it reads DEIH. The Helicase C-terminal 1 domain maps to 755–990; the sequence is PLEQQYIGIS…TVRDAVNWLG (236 aa). The region spanning 1050–1356 is the SEC63 1 domain; it reads STELGKVASH…GAEYSLPISF (307 aa). A Helicase ATP-binding 2 domain is found at 1407–1584; it reads NCMYQSNDNA…WIGATPQTCY (178 aa). 1420-1427 provides a ligand contact to ATP; that stretch reads APTNSGKT. The short motif at 1526 to 1529 is the DEAH box element; sequence DELH. A Helicase C-terminal 2 domain is found at 1657–1832; that stretch reads TLTKPYLVCE…TITKKQDALD (176 aa). Positions 1892 to 2215 constitute an SEC63 2 domain; that stretch reads PLNLGIIASY…GCDQEHELNI (324 aa).

The protein belongs to the helicase family.

This is Activating signal cointegrator 1 complex subunit 3-like (ascc3l) from Dictyostelium discoideum (Social amoeba).